Consider the following 137-residue polypeptide: Protein FrxA (137 aa).

This Pyrococcus furiosus (strain ATCC 43587 / DSM 3638 / JCM 8422 / Vc1) protein is Protein FrxA (frxA).